Here is a 332-residue protein sequence, read N- to C-terminus: Very-long-chain 3-oxoacyl-CoA reductase (332 aa).

Residues Gly-15–Leu-35 form a helical membrane-spanning segment. The NADP(+) site is built by Val-60, Asp-115, Asp-123, Asn-142, Lys-177, Tyr-209, Lys-213, Val-242, and Thr-244. The active-site Proton donor is the Tyr-209. Lys-213 serves as the catalytic Lowers pKa of active site Tyr.

This sequence belongs to the short-chain dehydrogenases/reductases (SDR) family.

It localises to the endoplasmic reticulum membrane. It carries out the reaction a very-long-chain (3R)-3-hydroxyacyl-CoA + NADP(+) = a very-long-chain 3-oxoacyl-CoA + NADPH + H(+). Its pathway is lipid metabolism; fatty acid biosynthesis. In terms of biological role, component of the microsomal membrane bound fatty acid elongation system, which produces the 26-carbon very long-chain fatty acids (VLCFA) from palmitate. Catalyzes the reduction of the 3-ketoacyl-CoA intermediate that is formed in each cycle of fatty acid elongation. VLCFAs serve as precursors for ceramide and sphingolipids. This chain is Very-long-chain 3-oxoacyl-CoA reductase, found in Neurospora crassa (strain ATCC 24698 / 74-OR23-1A / CBS 708.71 / DSM 1257 / FGSC 987).